The following is a 344-amino-acid chain: Glycerol-3-phosphate dehydrogenase [NAD(P)+] (344 aa).

Residues serine 11, tryptophan 12, histidine 32, arginine 33, and lysine 106 each coordinate NADPH. Positions 106, 136, and 138 each coordinate sn-glycerol 3-phosphate. Alanine 140 serves as a coordination point for NADPH. Sn-glycerol 3-phosphate-binding residues include lysine 192, aspartate 245, serine 255, arginine 256, and asparagine 257. Lysine 192 serves as the catalytic Proton acceptor. Arginine 256 lines the NADPH pocket. NADPH is bound by residues valine 280 and glutamate 282.

It belongs to the NAD-dependent glycerol-3-phosphate dehydrogenase family.

Its subcellular location is the cytoplasm. The enzyme catalyses sn-glycerol 3-phosphate + NAD(+) = dihydroxyacetone phosphate + NADH + H(+). It catalyses the reaction sn-glycerol 3-phosphate + NADP(+) = dihydroxyacetone phosphate + NADPH + H(+). The protein operates within membrane lipid metabolism; glycerophospholipid metabolism. In terms of biological role, catalyzes the reduction of the glycolytic intermediate dihydroxyacetone phosphate (DHAP) to sn-glycerol 3-phosphate (G3P), the key precursor for phospholipid synthesis. The sequence is that of Glycerol-3-phosphate dehydrogenase [NAD(P)+] from Geobacillus kaustophilus (strain HTA426).